The primary structure comprises 442 residues: MPLPCDTILQAALIVTQDDARTVIEDGAIAIHEGRIAAVGQRDAIVGNWHGATVIDMGASLIMPGLVNAHTHASMTLLRGLADDLPLMDWLTGHIFPVEKGLTGELVELGALLGCAEMLRTGTTAFSDMYLIEDATLRAVDRAGLRCLAGEAIFAFPSPAYADPETAFDLVRAQHDRWKHHARAALAVAPHAVYTSTPAILARCRDLAEELGLPIHLHLAETATETAQCIEQHGARPVPYCDGLGLLTPRTTLAHCVDLTEGEIDLLAERGVTVAHCPESNMKLASGIAPATAMLGRGMTLGLGTDGAASNNSLNMFTEMTSCALLHKVHHMDPTCAPASAVLDMATRGGAHALHMQGIGRIEAGCPADIIALDLRAPNMQPIFNPASHLVYAATGHETRLAMVGGEVLYLDGCYTRFDMDDLLKEVRKARTWAMEQVRAAR.

Positions 70 and 72 each coordinate Zn(2+). Substrate contacts are provided by Glu99 and His191. His218 contributes to the Zn(2+) binding site. Glu221 and Asp306 together coordinate substrate. Residue Asp306 coordinates Zn(2+).

The protein belongs to the metallo-dependent hydrolases superfamily. MTA/SAH deaminase family. Zn(2+) serves as cofactor.

It catalyses the reaction S-adenosyl-L-homocysteine + H2O + H(+) = S-inosyl-L-homocysteine + NH4(+). The catalysed reaction is S-methyl-5'-thioadenosine + H2O + H(+) = S-methyl-5'-thioinosine + NH4(+). In terms of biological role, catalyzes the deamination of 5-methylthioadenosine and S-adenosyl-L-homocysteine into 5-methylthioinosine and S-inosyl-L-homocysteine, respectively. Is also able to deaminate adenosine. In Nitratidesulfovibrio vulgaris (strain DP4) (Desulfovibrio vulgaris), this protein is 5-methylthioadenosine/S-adenosylhomocysteine deaminase.